We begin with the raw amino-acid sequence, 534 residues long: MALPSLHEFPWLTTVIAYPVLAALFIPLIPAPAGDPSTRAYAQKLAERIRWFALFIAVTDLLILLAGFYVGYDPGQTGLQLLERYTWVPQVGLSWSVGADGLSMPLILLTAFITTLAILAAWPVTLKPRLFYFLMLAMYGGQIGVFAVQDMLLFFLMWELELIPVYLLLSIWGGANRLYAATKFILYTALSSLFILVAGLAMAFYGDPISFDMTDLAHKTYPLTFQLLMYGAFLIAYGVKLPIFPLHTWLPDAHGEATAPVHMLLAGILLKMGGYALMRMNAGMLPDAHLYFAPVLIVLGVVNIIFAALTSFAQRNLKRKIACSSISHMGFVLIGIGSLTEIGMSGAMLQMISHGLIGASLFFLVGATYDRTHTLELEEMGGVGLKMPKIFSMFTACSLASLALPGMSGFVAEIMVFIGMATTDAYSLPFRLVVVFLAAVGVILTPIYLLSMLRQIFFGPENKELTEHEELVDAEPREVFIIACLLIPIIGIGLYPKLVTSLYDQSTNALVALLRQELPQTGETVAQAPALYNN.

14 helical membrane-spanning segments follow: residues 9-29 (FPWLTTVIAYPVLAALFIPLI), 51-71 (WFALFIAVTDLLILLAGFYVG), 106-126 (LILLTAFITTLAILAAWPVTL), 130-150 (LFYFLMLAMYGGQIGVFAVQD), 152-172 (LLFFLMWELELIPVYLLLSIW), 184-204 (FILYTALSSLFILVAGLAMAF), 227-247 (LLMYGAFLIAYGVKLPIFPLH), 258-278 (TAPVHMLLAGILLKMGGYALM), 290-310 (LYFAPVLIVLGVVNIIFAALT), 326-346 (ISHMGFVLIGIGSLTEIGMSG), 347-367 (AMLQMISHGLIGASLFFLVGA), 399-419 (LASLALPGMSGFVAEIMVFIG), 432-452 (LVVVFLAAVGVILTPIYLLSM), and 479-499 (VFIIACLLIPIIGIGLYPKLV).

This sequence belongs to the complex I subunit 4 family.

It localises to the cellular thylakoid membrane. It catalyses the reaction a plastoquinone + NADH + (n+1) H(+)(in) = a plastoquinol + NAD(+) + n H(+)(out). It carries out the reaction a plastoquinone + NADPH + (n+1) H(+)(in) = a plastoquinol + NADP(+) + n H(+)(out). In terms of biological role, NDH-1 shuttles electrons from NAD(P)H, via FMN and iron-sulfur (Fe-S) centers, to quinones in the respiratory chain. The immediate electron acceptor for the enzyme in this species is believed to be plastoquinone. Couples the redox reaction to proton translocation (for every two electrons transferred, four hydrogen ions are translocated across the cytoplasmic membrane), and thus conserves the redox energy in a proton gradient. The sequence is that of NAD(P)H-quinone oxidoreductase chain 4 2 from Synechococcus sp. (strain JA-2-3B'a(2-13)) (Cyanobacteria bacterium Yellowstone B-Prime).